Consider the following 622-residue polypeptide: Basic helix-loop-helix ARNT-like protein 2 (622 aa).

Positions 1-10 are enriched in low complexity; it reads MAEAGVGSAE. Disordered regions lie at residues 1-29 and 41-86; these read MAEA…DGNS and PITK…EDEE. The span at 45–54 shows a compositional bias: polar residues; that stretch reads PATTSFNNSV. Acidic residues predominate over residues 67–76; it reads DNQDTVEVDG. Residues 77 to 86 show a composition bias toward basic and acidic residues; sequence DPQKRNEDEE. Residues 92 to 145 enclose the bHLH domain; it reads DFREAHSQTEKRRRDKMNNLIEELSAMIPQCNPMARKLDKLTVLRMAVQHLKSL. PAS domains are found at residues 163-235 and 342-412; these read KDDE…DVSP and VPQK…LQNK. One can recognise a PAC domain in the interval 417–460; sequence TNSYKFRAKDGSFITLKSQWFSFMNPWTKELEYIVSNNTVVLGH.

As to quaternary structure, component of the circadian core oscillator, which includes the CRY proteins, CLOCK, or NPAS2, BMAL1 or BMAL2, CSNK1D and/or CSNK1E, TIMELESS and the PER proteins. Interacts directly with CLOCK to form the BMAL2-CLOCK transactivator. Can form heterodimers or homodimers which interact directly with CLOCK to form the transcription activator. As to expression, expressed in the pineal gland.

Its subcellular location is the nucleus. In terms of biological role, transcriptional activator which forms a core component of the circadian clock. The circadian clock, an internal time-keeping system, regulates various physiological processes through the generation of approximately 24 hour circadian rhythms in gene expression, which are translated into rhythms in metabolism and behavior. It is derived from the Latin roots 'circa' (about) and 'diem' (day) and acts as an important regulator of a wide array of physiological functions including metabolism, sleep, body temperature, blood pressure, endocrine, immune, cardiovascular, and renal function. Consists of two major components: the central clock, residing in the suprachiasmatic nucleus (SCN) of the brain, and the peripheral clocks that are present in nearly every tissue and organ system. Both the central and peripheral clocks can be reset by environmental cues, also known as Zeitgebers (German for 'timegivers'). The predominant Zeitgeber for the central clock is light, which is sensed by retina and signals directly to the SCN. The central clock entrains the peripheral clocks through neuronal and hormonal signals, body temperature and feeding-related cues, aligning all clocks with the external light/dark cycle. Circadian rhythms allow an organism to achieve temporal homeostasis with its environment at the molecular level by regulating gene expression to create a peak of protein expression once every 24 hours to control when a particular physiological process is most active with respect to the solar day. Transcription and translation of core clock components (CLOCK, NPAS2, BMAL1, BMAL2, PER1, PER2, PER3, CRY1 and CRY2) plays a critical role in rhythm generation, whereas delays imposed by post-translational modifications (PTMs) are important for determining the period (tau) of the rhythms (tau refers to the period of a rhythm and is the length, in time, of one complete cycle). A diurnal rhythm is synchronized with the day/night cycle, while the ultradian and infradian rhythms have a period shorter and longer than 24 hours, respectively. Disruptions in the circadian rhythms contribute to the pathology of cardiovascular diseases, cancer, metabolic syndromes and aging. A transcription/translation feedback loop (TTFL) forms the core of the molecular circadian clock mechanism. Transcription factors, CLOCK or NPAS2 and BMAL1 or BMAL2, form the positive limb of the feedback loop, act in the form of a heterodimer and activate the transcription of core clock genes and clock-controlled genes (involved in key metabolic processes), harboring E-box elements (5'-CACGTG-3') within their promoters. The core clock genes: PER1/2/3 and CRY1/2 which are transcriptional repressors form the negative limb of the feedback loop and interact with the CLOCK|NPAS2-BMAL1|BMAL2 heterodimer inhibiting its activity and thereby negatively regulating their own expression. This heterodimer also activates nuclear receptors NR1D1/2 and RORA/B/G, which form a second feedback loop and which activate and repress BMAL1 transcription, respectively. The preferred binding motif for the CLOCK-BMAL1 heterodimer is 5'-CACGTGA-3', which contains a flanking adenine nucleotide at the 3-prime end of the canonical 6-nucleotide E-box sequence. CLOCK specifically binds to the half-site 5'-CAC-3', while BMAL1 binds to the half-site 5'-GTGA-3'. The sequence is that of Basic helix-loop-helix ARNT-like protein 2 (BMAL2) from Gallus gallus (Chicken).